Reading from the N-terminus, the 608-residue chain is Leucine aminopeptidase 2 (608 aa).

Substrate-binding positions include Gln-134 to Gln-136 and Pro-269 to Glu-274. Position 298 (His-298) interacts with Zn(2+). Glu-299 serves as the catalytic Proton acceptor. Zn(2+) is bound by residues His-302 and Glu-321. Catalysis depends on Tyr-386, which acts as the Proton donor.

Belongs to the peptidase M1 family. Requires Zn(2+) as cofactor.

The protein localises to the cytoplasm. It localises to the nucleus. It carries out the reaction an epoxide + H2O = an ethanediol. In terms of biological role, aminopeptidase that preferentially cleaves di- and tripeptides. Also has low epoxide hydrolase activity (in vitro). Can hydrolyze the epoxide leukotriene LTA(4) but it forms preferentially 5,6-dihydroxy-7,9,11,14-eicosatetraenoic acid rather than the cytokine leukotriene B(4) as the product compared to the homologous mammalian enzyme (in vitro). The protein is Leucine aminopeptidase 2 of Sclerotinia sclerotiorum (strain ATCC 18683 / 1980 / Ss-1) (White mold).